A 514-amino-acid chain; its full sequence is 1-pyrroline-5-carboxylate dehydrogenase (514 aa).

Catalysis depends on residues Glu286 and Cys320.

This sequence belongs to the aldehyde dehydrogenase family. RocA subfamily.

It catalyses the reaction L-glutamate 5-semialdehyde + NAD(+) + H2O = L-glutamate + NADH + 2 H(+). It functions in the pathway amino-acid degradation; L-proline degradation into L-glutamate; L-glutamate from L-proline: step 2/2. This Staphylococcus epidermidis (strain ATCC 12228 / FDA PCI 1200) protein is 1-pyrroline-5-carboxylate dehydrogenase.